We begin with the raw amino-acid sequence, 249 residues long: Small ribosomal subunit protein uS2 (249 aa).

It belongs to the universal ribosomal protein uS2 family.

The polypeptide is Small ribosomal subunit protein uS2 (Listeria innocua serovar 6a (strain ATCC BAA-680 / CLIP 11262)).